Here is a 507-residue protein sequence, read N- to C-terminus: Cytochrome P450 7B1 (507 aa).

Transmembrane regions (helical) follow at residues 14–34 (PLAL…LFLL), 178–198 (IFAF…YGKI), and 287–307 (FLWA…YYIL). Residue cysteine 447 coordinates heme.

The protein belongs to the cytochrome P450 family. Requires heme as cofactor. As to expression, highly expressed in brain structures including the corpus callosum, the anterior commissure and fornix. The hippocampal expression is particularly prominent in the dentate gyrus. Expressed in liver and kidney. The hepatic expression is sexually dimorphic, predominantly detected in male liver while barely detectable in females. Expressed in lymph nodes and spleens, in both lymphoid and stromal compartments. Higher expression is detected in fibroblastic reticular cells, a type of stromal cells in the lymph nodes. Also expressed at high levels in the outer follicle and at the B cell-T cell boundary of splenic germinal centers. Expressed in dendritic cells (DCs) subpopulations being most abundant in CD8-positive DCs.

Its subcellular location is the endoplasmic reticulum membrane. It localises to the microsome membrane. The catalysed reaction is 25-hydroxycholesterol + reduced [NADPH--hemoprotein reductase] + O2 = 7alpha,25-dihydroxycholesterol + oxidized [NADPH--hemoprotein reductase] + H2O + H(+). It carries out the reaction (25R)-cholest-5-ene-3beta,26-diol + reduced [NADPH--hemoprotein reductase] + O2 = (25R)-cholest-5-en-3beta,7alpha,26-triol + oxidized [NADPH--hemoprotein reductase] + H2O + H(+). It catalyses the reaction (24S)-hydroxycholesterol + reduced [NADPH--hemoprotein reductase] + O2 = (24S)-7alpha-dihydroxycholesterol + oxidized [NADPH--hemoprotein reductase] + H2O + H(+). The enzyme catalyses (24S)-25-epoxycholesterol + reduced [NADPH--hemoprotein reductase] + O2 = (24S,25)-epoxy-7alpha-hydroxycholesterol + oxidized [NADPH--hemoprotein reductase] + H2O + H(+). The catalysed reaction is (22R)-hydroxycholesterol + reduced [NADPH--hemoprotein reductase] + O2 = (22R,7alpha)-dihydroxycholesterol + oxidized [NADPH--hemoprotein reductase] + H2O + H(+). It carries out the reaction androst-5-en-3beta,17beta-diol + reduced [NADPH--hemoprotein reductase] + O2 = androst-5-en-3beta,7alpha,17beta-triol + oxidized [NADPH--hemoprotein reductase] + H2O + H(+). It catalyses the reaction 5alpha-androstane-3beta,17beta-diol + reduced [NADPH--hemoprotein reductase] + O2 = 5alpha-androstane-3beta,6alpha,17beta-triol + oxidized [NADPH--hemoprotein reductase] + H2O + H(+). The enzyme catalyses 3beta-hydroxyandrost-5-en-17-one + reduced [NADPH--hemoprotein reductase] + O2 = 3beta,7alpha-dihydroxyandrost-5-en-17-one + oxidized [NADPH--hemoprotein reductase] + H2O + H(+). The catalysed reaction is 3beta-hydroxy-5alpha-androstan-17-one + reduced [NADPH--hemoprotein reductase] + O2 = 3beta,7alpha-dihydroxy-5alpha-androstan-17-one + oxidized [NADPH--hemoprotein reductase] + H2O + H(+). It carries out the reaction pregnenolone + reduced [NADPH--hemoprotein reductase] + O2 = 7alpha-hydroxypregnenolone + oxidized [NADPH--hemoprotein reductase] + H2O + H(+). It participates in lipid metabolism; bile acid biosynthesis. The protein operates within steroid hormone biosynthesis. Inhibited by drugs voriconazole and metyrapone. In terms of biological role, a cytochrome P450 monooxygenase involved in the metabolism of endogenous oxysterols and steroid hormones, including neurosteroids. Mechanistically, uses molecular oxygen inserting one oxygen atom into a substrate, and reducing the second into a water molecule, with two electrons provided by NADPH via cytochrome P450 reductase (CPR; NADPH-ferrihemoprotein reductase). Catalyzes the hydroxylation of carbon hydrogen bonds of steroids with a preference for 7-alpha position. Usually metabolizes steroids carrying a hydroxy group at position 3, functioning as a 3-hydroxy steroid 7-alpha hydroxylase. Hydroxylates oxysterols, including 25-hydroxycholesterol and (25R)-cholest-5-ene-3beta,26-diol toward 7-alpha hydroxy derivatives, which may be transported to the liver and converted to bile acids. Via its product 7-alpha,25-dihydroxycholesterol, a ligand for the chemotactic G protein-coupled receptor GPR183/EBI2, regulates B cell migration in germinal centers of lymphoid organs, thus guiding efficient maturation of plasma B cells and overall antigen-specific humoral immune response. 7-alpha hydroxylates neurosteroids, including 3beta-hydroxyandrost-5-en-17-one (dehydroepiandrosterone) and pregnenolone, both involved in hippocampus-associated memory and learning. Metabolizes androstanoids toward 6- or 7-alpha hydroxy derivatives. The protein is Cytochrome P450 7B1 of Mus musculus (Mouse).